The following is a 71-amino-acid chain: SPbeta prophage-derived uncharacterized protein YorP (71 aa).

The sequence is that of SPbeta prophage-derived uncharacterized protein YorP (yorP) from Bacillus subtilis (strain 168).